A 340-amino-acid chain; its full sequence is tRNA N6-adenosine threonylcarbamoyltransferase (340 aa).

Residues His-115 and His-119 each coordinate Fe cation. Substrate is bound by residues 138 to 142 (VVSGG), Asp-171, Gly-184, Asp-188, and Asn-278. Asp-306 serves as a coordination point for Fe cation.

Belongs to the KAE1 / TsaD family. It depends on Fe(2+) as a cofactor.

It localises to the cytoplasm. It catalyses the reaction L-threonylcarbamoyladenylate + adenosine(37) in tRNA = N(6)-L-threonylcarbamoyladenosine(37) in tRNA + AMP + H(+). In terms of biological role, required for the formation of a threonylcarbamoyl group on adenosine at position 37 (t(6)A37) in tRNAs that read codons beginning with adenine. Is involved in the transfer of the threonylcarbamoyl moiety of threonylcarbamoyl-AMP (TC-AMP) to the N6 group of A37, together with TsaE and TsaB. TsaD likely plays a direct catalytic role in this reaction. The polypeptide is tRNA N6-adenosine threonylcarbamoyltransferase (Clostridium botulinum (strain Hall / ATCC 3502 / NCTC 13319 / Type A)).